Here is a 282-residue protein sequence, read N- to C-terminus: Transcription repressor OFP18 (282 aa).

Residues 1–85 are disordered; it reads MVRKMKLPFL…YSSFSSTSHA (85 aa). Positions 15–35 are enriched in low complexity; the sequence is SSSSFSSNSSSSSSSWPWPSS. The segment covering 36 to 47 has biased composition (polar residues); the sequence is HQQNLKTISSKA. Over residues 66 to 85 the composition is skewed to low complexity; that stretch reads SFSSSPSSSSYSSFSSTSHA. In terms of domain architecture, OVATE spans 139–199; the sequence is LSLESNDPYT…FAAFVDLVLN (61 aa).

Expressed in roots and shoots.

It is found in the nucleus. Functionally, transcriptional repressor that regulates multiple aspects of plant growth and development through the regulation of BEL1-LIKE (BLH) and KNOX TALE (KNAT) homeodomain transcription factors. The chain is Transcription repressor OFP18 (OFP18) from Arabidopsis thaliana (Mouse-ear cress).